The chain runs to 142 residues: Large ribosomal subunit protein uL11 (142 aa).

This sequence belongs to the universal ribosomal protein uL11 family. As to quaternary structure, part of the ribosomal stalk of the 50S ribosomal subunit. Interacts with L10 and the large rRNA to form the base of the stalk. L10 forms an elongated spine to which L12 dimers bind in a sequential fashion forming a multimeric L10(L12)X complex. One or more lysine residues are methylated.

Forms part of the ribosomal stalk which helps the ribosome interact with GTP-bound translation factors. This chain is Large ribosomal subunit protein uL11, found in Sinorhizobium fredii (strain NBRC 101917 / NGR234).